Consider the following 382-residue polypeptide: DNA double-strand break repair protein Mre11 (382 aa).

Mn(2+) contacts are provided by D8, H10, D49, and D84. H85 functions as the Proton donor in the catalytic mechanism. Mn(2+) contacts are provided by H156, H187, and H189.

The protein belongs to the MRE11/RAD32 family. Homodimer. Forms a heterotetramer composed of two Mre11 subunits and two Rad50 subunits. Interacts with Rad50 and HerA. Mn(2+) is required as a cofactor.

Nuclease activity is regulated by Rad50. Part of the Rad50/Mre11 complex, which is involved in the early steps of DNA double-strand break (DSB) repair. The complex may facilitate opening of the processed DNA ends to aid in the recruitment of HerA and NurA. Mre11 binds to DSB ends and has both double-stranded 3'-5' exonuclease activity and single-stranded endonuclease activity. Recruited immediately to chromosomal DNA after gamma irradiation, and remains DNA bound in the course of DNA repair. The chain is DNA double-strand break repair protein Mre11 from Sulfolobus acidocaldarius (strain ATCC 33909 / DSM 639 / JCM 8929 / NBRC 15157 / NCIMB 11770).